A 476-amino-acid chain; its full sequence is Glycogen synthase (476 aa).

Lysine 15 contributes to the ADP-alpha-D-glucose binding site.

Belongs to the glycosyltransferase 1 family. Bacterial/plant glycogen synthase subfamily.

The catalysed reaction is [(1-&gt;4)-alpha-D-glucosyl](n) + ADP-alpha-D-glucose = [(1-&gt;4)-alpha-D-glucosyl](n+1) + ADP + H(+). It functions in the pathway glycan biosynthesis; glycogen biosynthesis. Functionally, synthesizes alpha-1,4-glucan chains using ADP-glucose. This chain is Glycogen synthase, found in Leptospira biflexa serovar Patoc (strain Patoc 1 / Ames).